Here is a 536-residue protein sequence, read N- to C-terminus: GMP synthase [glutamine-hydrolyzing] (536 aa).

A Glutamine amidotransferase type-1 domain is found at 4 to 206; it reads KILILDFGSQ…VLDICGARAD (203 aa). Residue Cys85 is the Nucleophile of the active site. Catalysis depends on residues His180 and Glu182. Residues 207-404 enclose the GMPS ATP-PPase domain; that stretch reads WIMGDYISEA…LGLPYHMVYR (198 aa). 234-240 provides a ligand contact to ATP; that stretch reads SGGVDSS.

As to quaternary structure, homodimer.

It catalyses the reaction XMP + L-glutamine + ATP + H2O = GMP + L-glutamate + AMP + diphosphate + 2 H(+). The protein operates within purine metabolism; GMP biosynthesis; GMP from XMP (L-Gln route): step 1/1. Its function is as follows. Catalyzes the synthesis of GMP from XMP. The sequence is that of GMP synthase [glutamine-hydrolyzing] from Albidiferax ferrireducens (strain ATCC BAA-621 / DSM 15236 / T118) (Rhodoferax ferrireducens).